The chain runs to 154 residues: Large ribosomal subunit protein bL9c (154 aa).

The protein belongs to the bacterial ribosomal protein bL9 family.

It is found in the plastid. The protein localises to the chloroplast. In terms of biological role, binds to the 23S rRNA. The polypeptide is Large ribosomal subunit protein bL9c (Gracilaria tenuistipitata var. liui (Red alga)).